Reading from the N-terminus, the 517-residue chain is UDP-N-acetylmuramoyl-tripeptide--D-alanyl-D-alanine ligase (517 aa).

138–144 is a binding site for ATP; that stretch reads GSSGKTS.

Belongs to the MurCDEF family. MurF subfamily.

The protein resides in the cytoplasm. It carries out the reaction D-alanyl-D-alanine + UDP-N-acetyl-alpha-D-muramoyl-L-alanyl-gamma-D-glutamyl-meso-2,6-diaminopimelate + ATP = UDP-N-acetyl-alpha-D-muramoyl-L-alanyl-gamma-D-glutamyl-meso-2,6-diaminopimeloyl-D-alanyl-D-alanine + ADP + phosphate + H(+). It participates in cell wall biogenesis; peptidoglycan biosynthesis. In terms of biological role, involved in cell wall formation. Catalyzes the final step in the synthesis of UDP-N-acetylmuramoyl-pentapeptide, the precursor of murein. This is UDP-N-acetylmuramoyl-tripeptide--D-alanyl-D-alanine ligase from Mycobacterium leprae (strain TN).